The following is a 594-amino-acid chain: Maternal effect protein oskar (594 aa).

The segment covering glutamine 44–histidine 62 has biased composition (low complexity). Positions glutamine 44–lysine 68 are disordered. Residues glutamate 174 to proline 243 form the HTH OST-type domain.

Interacts with smaug (smg). Posterior pole of the oocyte.

In terms of biological role, organizes the germ plasm and directs localization of the posterior determinant nanos. Oskar protein is required to keep oskar RNA and staufen protein at the posterior pole. In Drosophila virilis (Fruit fly), this protein is Maternal effect protein oskar (osk).